The primary structure comprises 428 residues: Zinc-type alcohol dehydrogenase B (428 aa).

Zn(2+)-binding residues include Cys116, His137, Cys167, Cys170, Cys173, and Cys181. Residue Lys393 is modified to N6-benzoyllysine.

The protein belongs to the zinc-containing alcohol dehydrogenase family. Class-III subfamily. In terms of assembly, homodimer. It depends on Zn(2+) as a cofactor. Post-translationally, benzoylation at lys-393 by gcnE leads to the activation od adhB.

It catalyses the reaction a primary alcohol + NAD(+) = an aldehyde + NADH + H(+). The enzyme catalyses a secondary alcohol + NAD(+) = a ketone + NADH + H(+). In terms of biological role, zinc-type alcohol dehydrogenase involved in development, secondary metabolism, pathogenicity, and stress response. Specifically controls the formation of sclerotia and the biosynthesis of aflatoxin. Contribute to seed colonization of A flavus on host maize seed. This is Zinc-type alcohol dehydrogenase B from Aspergillus flavus (strain ATCC 200026 / FGSC A1120 / IAM 13836 / NRRL 3357 / JCM 12722 / SRRC 167).